A 400-amino-acid chain; its full sequence is CCA-adding enzyme (400 aa).

Gly-28 and Arg-31 together coordinate ATP. Residues Gly-28 and Arg-31 each coordinate CTP. Positions 41 and 43 each coordinate Mg(2+). Residues Arg-112, Asp-155, Arg-158, Arg-161, and Arg-164 each coordinate ATP. 5 residues coordinate CTP: Arg-112, Asp-155, Arg-158, Arg-161, and Arg-164.

Belongs to the tRNA nucleotidyltransferase/poly(A) polymerase family. Bacterial CCA-adding enzyme type 3 subfamily. As to quaternary structure, homodimer. Requires Mg(2+) as cofactor.

The catalysed reaction is a tRNA precursor + 2 CTP + ATP = a tRNA with a 3' CCA end + 3 diphosphate. The enzyme catalyses a tRNA with a 3' CCA end + 2 CTP + ATP = a tRNA with a 3' CCACCA end + 3 diphosphate. Its function is as follows. Catalyzes the addition and repair of the essential 3'-terminal CCA sequence in tRNAs without using a nucleic acid template. Adds these three nucleotides in the order of C, C, and A to the tRNA nucleotide-73, using CTP and ATP as substrates and producing inorganic pyrophosphate. tRNA 3'-terminal CCA addition is required both for tRNA processing and repair. Also involved in tRNA surveillance by mediating tandem CCA addition to generate a CCACCA at the 3' terminus of unstable tRNAs. While stable tRNAs receive only 3'-terminal CCA, unstable tRNAs are marked with CCACCA and rapidly degraded. The polypeptide is CCA-adding enzyme (Staphylococcus epidermidis (strain ATCC 12228 / FDA PCI 1200)).